Here is an 89-residue protein sequence, read N- to C-terminus: Small ribosomal subunit protein uS15 (89 aa).

Positions 1 to 21 (MSITTEEKARVMKEYGTKDGD) are enriched in basic and acidic residues. The tract at residues 1-24 (MSITTEEKARVMKEYGTKDGDTGS) is disordered.

It belongs to the universal ribosomal protein uS15 family. As to quaternary structure, part of the 30S ribosomal subunit. Forms a bridge to the 50S subunit in the 70S ribosome, contacting the 23S rRNA.

Functionally, one of the primary rRNA binding proteins, it binds directly to 16S rRNA where it helps nucleate assembly of the platform of the 30S subunit by binding and bridging several RNA helices of the 16S rRNA. In terms of biological role, forms an intersubunit bridge (bridge B4) with the 23S rRNA of the 50S subunit in the ribosome. This chain is Small ribosomal subunit protein uS15, found in Ruegeria pomeroyi (strain ATCC 700808 / DSM 15171 / DSS-3) (Silicibacter pomeroyi).